The chain runs to 135 residues: Thioredoxin H5 (135 aa).

The region spanning 13 to 128 is the Thioredoxin domain; the sequence is EHLDYSGGNV…LQEKFEQLNR (116 aa). Residues Cys54 and Cys57 each act as nucleophile in the active site. A disulfide bridge connects residues Cys54 and Cys57.

It belongs to the thioredoxin family. Plant H-type subfamily.

Its subcellular location is the cytoplasm. In terms of biological role, probable thiol-disulfide oxidoreductase that may be involved in the redox regulation of a number of cytosolic enzymes. This Oryza sativa subsp. japonica (Rice) protein is Thioredoxin H5.